Reading from the N-terminus, the 172-residue chain is Ribosome maturation factor RimM (172 aa).

The 74-residue stretch at 95–168 (AEGEFYYHQI…RVDVEIMEGL (74 aa)) folds into the PRC barrel domain.

The protein belongs to the RimM family. Binds ribosomal protein uS19.

Its subcellular location is the cytoplasm. Its function is as follows. An accessory protein needed during the final step in the assembly of 30S ribosomal subunit, possibly for assembly of the head region. Essential for efficient processing of 16S rRNA. May be needed both before and after RbfA during the maturation of 16S rRNA. It has affinity for free ribosomal 30S subunits but not for 70S ribosomes. This is Ribosome maturation factor RimM from Streptococcus equi subsp. zooepidemicus (strain MGCS10565).